Here is a 570-residue protein sequence, read N- to C-terminus: Urease subunit alpha (570 aa).

Residues 131–570 enclose the Urease domain; sequence GGVDTHIHFI…LPMAQRYFLF (440 aa). Ni(2+)-binding residues include His136, His138, and Lys219. At Lys219 the chain carries N6-carboxylysine. Residue His221 coordinates substrate. Residues His248 and His274 each coordinate Ni(2+). The active-site Proton donor is the His322. A Ni(2+)-binding site is contributed by Asp362.

It belongs to the metallo-dependent hydrolases superfamily. Urease alpha subunit family. Heterotrimer of UreA (gamma), UreB (beta) and UreC (alpha) subunits. Three heterotrimers associate to form the active enzyme. It depends on Ni cation as a cofactor. Carboxylation allows a single lysine to coordinate two nickel ions.

Its subcellular location is the cytoplasm. It carries out the reaction urea + 2 H2O + H(+) = hydrogencarbonate + 2 NH4(+). Its pathway is nitrogen metabolism; urea degradation; CO(2) and NH(3) from urea (urease route): step 1/1. In Methylocella silvestris (strain DSM 15510 / CIP 108128 / LMG 27833 / NCIMB 13906 / BL2), this protein is Urease subunit alpha.